The primary structure comprises 276 residues: MLLRFTKMHGLGNDFMVLDLVSQHAHVQPKHVKLWGDRNTGVGFDQLLIVEAPSSPDVDFRYRIFNADGSEVEQCGNGARCFARFVQDKRLTVKKSIRVETKGGIIELNIRPDGQVTVDMGPPRLAPAEIPFQAEREALSYEIEVNGQRVELAAVSMGNPHGVLRVENVDSAPVHSLGPQLEVHPRFPKKANIGFLQVLDPHHARLRVWERGVGETQACGTGACAAAVAGIRQGWLQSPVQIDLPGGRLHIEWAGPGQPVMMTGPAVRVYEGQVRL.

Substrate contacts are provided by asparagine 13, glutamine 46, and asparagine 66. Cysteine 75 serves as the catalytic Proton donor. Substrate-binding positions include 76–77 (GN), asparagine 159, asparagine 192, and 210–211 (ER). Catalysis depends on cysteine 219, which acts as the Proton acceptor. 220 to 221 (GT) contributes to the substrate binding site.

The protein belongs to the diaminopimelate epimerase family. As to quaternary structure, homodimer.

It localises to the cytoplasm. The catalysed reaction is (2S,6S)-2,6-diaminopimelate = meso-2,6-diaminopimelate. It functions in the pathway amino-acid biosynthesis; L-lysine biosynthesis via DAP pathway; DL-2,6-diaminopimelate from LL-2,6-diaminopimelate: step 1/1. In terms of biological role, catalyzes the stereoinversion of LL-2,6-diaminopimelate (L,L-DAP) to meso-diaminopimelate (meso-DAP), a precursor of L-lysine and an essential component of the bacterial peptidoglycan. The polypeptide is Diaminopimelate epimerase (Pseudomonas aeruginosa (strain UCBPP-PA14)).